The following is a 145-amino-acid chain: Hemoglobin subunit beta-A (145 aa).

Positions 1-145 (MLTAEEKAAV…VANALAHRYH (145 aa)) constitute a Globin domain. Residues H62 and H91 each coordinate heme b.

It belongs to the globin family. Heterotetramer of two alpha chains and two beta chains. In terms of tissue distribution, red blood cells.

Functionally, involved in oxygen transport from the lung to the various peripheral tissues. This chain is Hemoglobin subunit beta-A, found in Bos javanicus (Wild banteng).